The primary structure comprises 116 residues: Large ribosomal subunit protein bL19 (116 aa).

The protein belongs to the bacterial ribosomal protein bL19 family.

Functionally, this protein is located at the 30S-50S ribosomal subunit interface and may play a role in the structure and function of the aminoacyl-tRNA binding site. This is Large ribosomal subunit protein bL19 from Streptomyces avermitilis (strain ATCC 31267 / DSM 46492 / JCM 5070 / NBRC 14893 / NCIMB 12804 / NRRL 8165 / MA-4680).